The following is a 226-amino-acid chain: ATP synthase F(0) complex subunit a (226 aa).

The next 6 membrane-spanning stretches (helical) occupy residues 12–32 (PTMMGLPIVILIVLFPSILFP), 68–88 (WALMLISLILFIGSTNLLGLL), 97–117 (QLSMNLGMAIPLWAGTVITGF), 138–158 (IPMLVIIETISLFIQPMALAV), 164–184 (ITAGHLLIHLIGGATLALMDI), and 189–209 (AFITFIVLILLTILEFAVALI).

This sequence belongs to the ATPase A chain family. In terms of assembly, component of the ATP synthase complex composed at least of ATP5F1A/subunit alpha, ATP5F1B/subunit beta, ATP5MC1/subunit c (homooctomer), MT-ATP6/subunit a, MT-ATP8/subunit 8, ATP5ME/subunit e, ATP5MF/subunit f, ATP5MG/subunit g, ATP5MK/subunit k, ATP5MJ/subunit j, ATP5F1C/subunit gamma, ATP5F1D/subunit delta, ATP5F1E/subunit epsilon, ATP5PF/subunit F6, ATP5PB/subunit b, ATP5PD/subunit d, ATP5PO/subunit OSCP. ATP synthase complex consists of a soluble F(1) head domain (subunits alpha(3) and beta(3)) - the catalytic core - and a membrane F(0) domain - the membrane proton channel (subunits c, a, 8, e, f, g, k and j). These two domains are linked by a central stalk (subunits gamma, delta, and epsilon) rotating inside the F1 region and a stationary peripheral stalk (subunits F6, b, d, and OSCP). Interacts with DNAJC30; interaction is direct.

The protein resides in the mitochondrion inner membrane. It carries out the reaction H(+)(in) = H(+)(out). Subunit a, of the mitochondrial membrane ATP synthase complex (F(1)F(0) ATP synthase or Complex V) that produces ATP from ADP in the presence of a proton gradient across the membrane which is generated by electron transport complexes of the respiratory chain. ATP synthase complex consist of a soluble F(1) head domain - the catalytic core - and a membrane F(1) domain - the membrane proton channel. These two domains are linked by a central stalk rotating inside the F(1) region and a stationary peripheral stalk. During catalysis, ATP synthesis in the catalytic domain of F(1) is coupled via a rotary mechanism of the central stalk subunits to proton translocation. With the subunit c (ATP5MC1), forms the proton-conducting channel in the F(0) domain, that contains two crucial half-channels (inlet and outlet) that facilitate proton movement from the mitochondrial intermembrane space (IMS) into the matrix. Protons are taken up via the inlet half-channel and released through the outlet half-channel, following a Grotthuss mechanism. This chain is ATP synthase F(0) complex subunit a, found in Halichoerus grypus (Gray seal).